The primary structure comprises 474 residues: Tocopherol cyclase, chloroplastic (474 aa).

The N-terminal 65 residues, 1–65 (MNLAVAAALP…TPTPQDRSLR (65 aa)), are a transit peptide targeting the chloroplast.

In terms of tissue distribution, present in all green tissues, both in bundle sheath and in mesophyll cells.

Its subcellular location is the plastid. The protein resides in the chloroplast. It catalyses the reaction gamma-tocopherol = 2,3-dimethyl-6-phytylbenzene-1,4-diol. The protein operates within cofactor biosynthesis; tocopherol biosynthesis. Its function is as follows. Involved in the synthesis of tocopherols (vitamin E), which presumably protect photosynthetic complexes from oxidative stress. Catalyzes the conversion of 2,3-dimethyl-5-phytyl-1,4-hydroquinone (DMPQ) to gamma-tocopherol. This Zea mays (Maize) protein is Tocopherol cyclase, chloroplastic.